The following is a 226-amino-acid chain: CD9 antigen (226 aa).

Residues 1-12 (MPVKGGTKCIKY) are Cytoplasmic-facing. A lipid anchor (S-palmitoyl cysteine) is attached at Cys9. The chain crosses the membrane as a helical span at residues 13–33 (LLFGFNFIFWLAGIAVLAVGL). Over 34-53 (WLRFDSQTKSIFEQDSQPSS) the chain is Extracellular. Residues 54 to 74 (FYTGVYILIGAGALMMLVGFL) form a helical membrane-spanning segment. Topologically, residues 75 to 85 (GCCGAVQESQC) are cytoplasmic. Residues Cys76, Cys77, and Cys85 are each lipidated (S-palmitoyl cysteine). The helical transmembrane segment at 86-109 (MLGLFFGFLLVIFAIEIAAAIWGY) threads the bilayer. Over 110-193 (SHKDEVIQEV…KEVFHNKFHI (84 aa)) the chain is Extracellular. 2 disulfides stabilise this stretch: Cys150–Cys179 and Cys151–Cys165. A helical membrane pass occupies residues 194–219 (IGAVGIGIAVVMIFGMIFSMILCCAI). S-palmitoyl cysteine attachment occurs at residues Cys216 and Cys217. At 220 to 226 (RRSREMV) the chain is on the cytoplasmic side.

Belongs to the tetraspanin (TM4SF) family. In terms of assembly, forms both disulfide-linked homodimers and higher homooligomers as well as heterooligomers with other members of the tetraspanin family. Interacts (via the second extracellular domain) with integrin ITGAV:ITGB3. Interacts with integrin ITGA6:ITGB1; interaction takes place in oocytes and is involved in sperm-egg fusion. Part of integrin-tetraspanin complexes composed of CD81, beta-1 and beta-2 integrins in the membrane of monocyte/macrophages. Interacts with CD63; identified in a complex with CD63 and ITGB3. Associates with CR2/CD21 and with PTGFRN/CD9P1. Part of a complex composed of CD9, CD81, PTGFRN and IGSF8. Interacts directly with IGSF8. Interacts with PDPN; this interaction is homophilic and attenuates platelet aggregation and pulmonary metastasis induced by PDPN. Interacts (on T cell side) with CD81 at immunological synapses between antigen-presenting cells and T cells. Post-translationally, palmitoylated at a low, basal level in unstimulated platelets. The level of palmitoylation increases when platelets are activated by thrombin (in vitro). The protein exists in three forms with molecular masses between 22 and 27 kDa, and is known to carry covalently linked fatty acids. Palmitoylation by ZDHHC2 regulates CD9 expression, association with other tetraspanin family proteins and function in cell adhesion.

The protein resides in the cell membrane. It localises to the membrane. The protein localises to the secreted. It is found in the extracellular exosome. In terms of biological role, integral membrane protein associated with integrins, which regulates different processes, such as sperm-egg fusion, platelet activation and aggregation, and cell adhesion. Present at the cell surface of oocytes and plays a key role in sperm-egg fusion, possibly by organizing multiprotein complexes and the morphology of the membrane required for the fusion. In myoblasts, associates with CD81 and PTGFRN and inhibits myotube fusion during muscle regeneration. In macrophages, associates with CD81 and beta-1 and beta-2 integrins, and prevents macrophage fusion into multinucleated giant cells specialized in ingesting complement-opsonized large particles. Also prevents the fusion between mononuclear cell progenitors into osteoclasts in charge of bone resorption. Acts as a receptor for PSG17. Involved in platelet activation and aggregation. Regulates paranodal junction formation. Involved in cell adhesion, cell motility and tumor metastasis. This chain is CD9 antigen, found in Felis catus (Cat).